The sequence spans 66 residues: Large ribosomal subunit protein uL30 (66 aa).

Belongs to the universal ribosomal protein uL30 family. In terms of assembly, part of the 50S ribosomal subunit.

The sequence is that of Large ribosomal subunit protein uL30 from Brucella anthropi (strain ATCC 49188 / DSM 6882 / CCUG 24695 / JCM 21032 / LMG 3331 / NBRC 15819 / NCTC 12168 / Alc 37) (Ochrobactrum anthropi).